Here is a 429-residue protein sequence, read N- to C-terminus: Adenylosuccinate synthetase (429 aa).

GTP-binding positions include 12 to 18 and 40 to 42; these read GDEGKGK and GHT. Aspartate 13 (proton acceptor) is an active-site residue. Positions 13 and 40 each coordinate Mg(2+). Residues 13–16, 38–41, threonine 129, arginine 143, glutamine 224, threonine 239, and arginine 303 each bind IMP; these read DEGK and NAGH. The Proton donor role is filled by histidine 41. 299 to 305 serves as a coordination point for substrate; the sequence is VTTGRAR. GTP-binding positions include arginine 305, 331-333, and 413-415; these read KLD and GVG.

The protein belongs to the adenylosuccinate synthetase family. Homodimer. The cofactor is Mg(2+).

The protein resides in the cytoplasm. The enzyme catalyses IMP + L-aspartate + GTP = N(6)-(1,2-dicarboxyethyl)-AMP + GDP + phosphate + 2 H(+). Its pathway is purine metabolism; AMP biosynthesis via de novo pathway; AMP from IMP: step 1/2. Plays an important role in the de novo pathway of purine nucleotide biosynthesis. Catalyzes the first committed step in the biosynthesis of AMP from IMP. In Rhodococcus opacus (strain B4), this protein is Adenylosuccinate synthetase.